The primary structure comprises 618 residues: MERAVEPWGPDLHRPEEREPQRGARTGLGSENVISQPNEFEHTPQEDDLGFKEEDLAPDHEVGNASLKPEGIQNWDDLWVQREGLGKPQPRDRGPRLLGEPRWGQASSDRAAVCGECGKSFRQMSDLVKHQRTHTGEKPYKCGVCGKGFGDSSARIKHQRTHSGEKPYRARPPAQGPPKIPRSRIPAGERPTICGECGKSFRQSSDLVKHQRTHTGEKPYKCGICGKGFGDSSARIKHQRTHRGEQPPRPVVPRRQPSRAATAATQGPKAQDKPYICTDCGKRFVLSCSLLSHQRSHLGPKPFGCDVCGKEFARGSDLVKHLRVHTGEKPYLCPECGKGFADSSARVKHLRTHSGERPHACPECDRTFSLSSTLLRHRLTHMEPQDFSFPGYPLPALIPSPPPPPLGTSPPLTPRSPSHSGEPFGLPGLEPEPGGPQAGEPPPPLAGDKPHKCPECGKGFRRSSDLVKHHRVHTGEKPYLCPECGKGFADSSARVKHLRTHRGERARPPPPSTLLRPHNPPGPVPMAPRPRVRAQPSGPSQPHVCGFCGKEFPRSSDLVKHRRTHTGEKPYKCAECGKGFGDSSARIKHQRGHLVLTPFGIGDGRARPLKQEAATGLE.

Met1 carries the post-translational modification N-acetylmethionine. Basic and acidic residues-rich tracts occupy residues 1-22 and 39-51; these read MERAVEPWGPDLHRPEEREPQR and EFEHTPQEDDLGF. Disordered regions lie at residues 1 to 51 and 78 to 109; these read MERA…DLGF and LWVQREGLGKPQPRDRGPRLLGEPRWGQASSD. Lys87 participates in a covalent cross-link: Glycyl lysine isopeptide (Lys-Gly) (interchain with G-Cter in SUMO2). C2H2-type zinc fingers lie at residues 112–134 and 140–162; these read AVCGECGKSFRQMSDLVKHQRTH and YKCGVCGKGFGDSSARIKHQRTH. The disordered stretch occupies residues 157–189; the sequence is KHQRTHSGEKPYRARPPAQGPPKIPRSRIPAGE. Lys179 participates in a covalent cross-link: Glycyl lysine isopeptide (Lys-Gly) (interchain with G-Cter in SUMO2). C2H2-type zinc fingers lie at residues 192 to 214 and 220 to 242; these read TICGECGKSFRQSSDLVKHQRTH and YKCGICGKGFGDSSARIKHQRTH. The segment at 235–271 is disordered; the sequence is RIKHQRTHRGEQPPRPVVPRRQPSRAATAATQGPKAQ. Lys269 participates in a covalent cross-link: Glycyl lysine isopeptide (Lys-Gly) (interchain with G-Cter in SUMO2). C2H2-type zinc fingers lie at residues 275 to 297 and 303 to 325; these read YICTDCGKRFVLSCSLLSHQRSH and FGCDVCGKEFARGSDLVKHLRVH. Lys329 participates in a covalent cross-link: Glycyl lysine isopeptide (Lys-Gly) (interchain with G-Cter in SUMO2). 2 C2H2-type zinc fingers span residues 331 to 353 and 359 to 381; these read YLCPECGKGFADSSARVKHLRTH and HACPECDRTFSLSSTLLRHRLTH. Residues 392–414 show a composition bias toward pro residues; that stretch reads YPLPALIPSPPPPPLGTSPPLTP. Positions 392–457 are disordered; the sequence is YPLPALIPSP…DKPHKCPECG (66 aa). Positions 415-432 are enriched in low complexity; that stretch reads RSPSHSGEPFGLPGLEPE. The C2H2-type 9 zinc finger occupies 451-473; sequence HKCPECGKGFRRSSDLVKHHRVH. Lys477 participates in a covalent cross-link: Glycyl lysine isopeptide (Lys-Gly) (interchain with G-Cter in SUMO2). The segment at 479 to 501 adopts a C2H2-type 10 zinc-finger fold; that stretch reads YLCPECGKGFADSSARVKHLRTH. The disordered stretch occupies residues 500-540; the sequence is THRGERARPPPPSTLLRPHNPPGPVPMAPRPRVRAQPSGPS. Positions 508 to 528 are enriched in pro residues; the sequence is PPPPSTLLRPHNPPGPVPMAP. 2 consecutive C2H2-type zinc fingers follow at residues 543–565 and 571–593; these read HVCGFCGKEFPRSSDLVKHRRTH and YKCAECGKGFGDSSARIKHQRGH. Residue Lys610 forms a Glycyl lysine isopeptide (Lys-Gly) (interchain with G-Cter in SUMO2) linkage.

The protein belongs to the krueppel C2H2-type zinc-finger protein family.

It is found in the nucleus. Functionally, may be involved in transcriptional regulation. The sequence is that of Zinc finger protein 48 (ZNF48) from Homo sapiens (Human).